The following is a 231-amino-acid chain: tRNA (guanine-N(1)-)-methyltransferase (231 aa).

Residues Gly109 and 133-138 (IGDYVL) each bind S-adenosyl-L-methionine.

Belongs to the RNA methyltransferase TrmD family. In terms of assembly, homodimer.

The protein localises to the cytoplasm. It catalyses the reaction guanosine(37) in tRNA + S-adenosyl-L-methionine = N(1)-methylguanosine(37) in tRNA + S-adenosyl-L-homocysteine + H(+). Functionally, specifically methylates guanosine-37 in various tRNAs. The sequence is that of tRNA (guanine-N(1)-)-methyltransferase from Nocardia farcinica (strain IFM 10152).